A 186-amino-acid polypeptide reads, in one-letter code: NADH-dependent FMN reductase SfnF (186 aa).

Belongs to the SsuE family.

It catalyses the reaction FMNH2 + NAD(+) = FMN + NADH + 2 H(+). In terms of biological role, involved in the dimethyl sulfide degradation pathway. Catalyzes the NADH-dependent reduction of FMN. This Pseudomonas putida (Arthrobacter siderocapsulatus) protein is NADH-dependent FMN reductase SfnF.